We begin with the raw amino-acid sequence, 90 residues long: Small ribosomal subunit protein bS16 (90 aa).

This sequence belongs to the bacterial ribosomal protein bS16 family.

The polypeptide is Small ribosomal subunit protein bS16 (Geobacillus sp. (strain WCH70)).